The following is a 449-amino-acid chain: Xylose isomerase (449 aa).

Residues His-101 and Asp-104 contribute to the active site. 7 residues coordinate Mg(2+): Glu-232, Glu-268, His-271, Asp-296, Asp-307, Asp-309, and Asp-340.

It belongs to the xylose isomerase family. As to quaternary structure, homotetramer. Requires Mg(2+) as cofactor.

It localises to the cytoplasm. The catalysed reaction is alpha-D-xylose = alpha-D-xylulofuranose. This Bifidobacterium longum (strain DJO10A) protein is Xylose isomerase.